Reading from the N-terminus, the 199-residue chain is NAD(P)H dehydrogenase (quinone) (199 aa).

Residues 4-190 enclose the Flavodoxin-like domain; the sequence is VLVLYYSTYG…DGARFLGQHV (187 aa). FMN contacts are provided by residues 10 to 15 and 78 to 80; these read STYGHI and TRF. An NAD(+)-binding site is contributed by tyrosine 12. Tryptophan 98 contributes to the substrate binding site. FMN-binding positions include 113-119 and histidine 134; that span reads STATQHG.

This sequence belongs to the WrbA family. FMN serves as cofactor.

The enzyme catalyses a quinone + NADH + H(+) = a quinol + NAD(+). It carries out the reaction a quinone + NADPH + H(+) = a quinol + NADP(+). The chain is NAD(P)H dehydrogenase (quinone) from Gluconacetobacter diazotrophicus (strain ATCC 49037 / DSM 5601 / CCUG 37298 / CIP 103539 / LMG 7603 / PAl5).